A 142-amino-acid chain; its full sequence is Large ribosomal subunit protein uL16 (142 aa).

This sequence belongs to the universal ribosomal protein uL16 family. Part of the 50S ribosomal subunit.

Binds 23S rRNA and is also seen to make contacts with the A and possibly P site tRNAs. This is Large ribosomal subunit protein uL16 from Thermosipho africanus (strain TCF52B).